Consider the following 322-residue polypeptide: Eukaryotic translation initiation factor 3 subunit I (322 aa).

5 WD repeats span residues 4–43 (GHERSITQIKYNREGDLLFSCSKDQKPNVWYSLNGERLGT), 46–85 (GHQGAVWCLDVDWESRKLITGAGDMTTKIWDVEYGTVIAS), 141–180 (MTESKITSMLWGPLDETIITGHDNGNIAIWDIRKGQKVVD), 184–223 (DHSAGINDMQLSKDGTMFVTASKDTTAKLFDSESLMCLKS), and 281–322 (GHFG…NIFE).

This sequence belongs to the eIF-3 subunit I family. Component of the eukaryotic translation initiation factor 3 (eIF-3) complex. The eIF-3 complex interacts with pix.

It localises to the cytoplasm. Functionally, component of the eukaryotic translation initiation factor 3 (eIF-3) complex, which is involved in protein synthesis of a specialized repertoire of mRNAs and, together with other initiation factors, stimulates binding of mRNA and methionyl-tRNAi to the 40S ribosome. The eIF-3 complex specifically targets and initiates translation of a subset of mRNAs involved in cell proliferation. The chain is Eukaryotic translation initiation factor 3 subunit I from Drosophila yakuba (Fruit fly).